Consider the following 92-residue polypeptide: Small ribosomal subunit protein uS19 (92 aa).

Belongs to the universal ribosomal protein uS19 family.

Functionally, protein S19 forms a complex with S13 that binds strongly to the 16S ribosomal RNA. This chain is Small ribosomal subunit protein uS19, found in Acidovorax sp. (strain JS42).